Here is an 895-residue protein sequence, read N- to C-terminus: La RNA-binding domain-containing protein LHP1 (895 aa).

Disordered regions lie at residues alanine 24–serine 265, serine 285–threonine 344, glycine 359–glycine 590, proline 796–valine 857, and valine 870–glutamine 895. Residues serine 31–glycine 75 show a composition bias toward low complexity. Positions glutamine 95–lysine 143 are enriched in basic and acidic residues. Positions serine 152–alanine 170 are enriched in low complexity. Polar residues-rich tracts occupy residues glycine 172–alanine 184 and lysine 192–asparagine 216. The segment covering aspartate 228–glutamate 244 has biased composition (basic and acidic residues). The segment covering glutamine 251 to leucine 260 has biased composition (low complexity). Over residues lysine 296 to glycine 314 the composition is skewed to basic and acidic residues. A compositionally biased stretch (low complexity) spans alanine 325 to threonine 336. Composition is skewed to basic and acidic residues over residues glycine 359–asparagine 371, histidine 405–glycine 428, glutamate 452–alanine 468, and glycine 485–alanine 495. Residues arginine 496–serine 508 show a composition bias toward low complexity. Residues proline 510–aspartate 521 are compositionally biased toward polar residues. Over residues arginine 563–arginine 572 the composition is skewed to gly residues. The HTH La-type RNA-binding domain maps to valine 706–proline 796. A Phosphoserine modification is found at serine 847. The segment covering glutamate 873–glutamate 884 has biased composition (basic and acidic residues). Acidic residues predominate over residues asparagine 885–glutamine 895.

Functionally, may act as an RNA-binding protein. The polypeptide is La RNA-binding domain-containing protein LHP1 (Cryptococcus neoformans var. grubii serotype A (strain H99 / ATCC 208821 / CBS 10515 / FGSC 9487) (Filobasidiella neoformans var. grubii)).